Here is a 93-residue protein sequence, read N- to C-terminus: MESAQAVAEPLDLVRLSLDEIVYVKLRGDRELNGRLHAYDEHLNMVLGDAEEIVTIFDDEETDKDKALKTIRKHYEMLFVRGDSVILIAPPRN.

The region spanning 9–93 (EPLDLVRLSL…SVILIAPPRN (85 aa)) is the Sm domain. Position 84 is a phosphoserine (Ser84).

This sequence belongs to the snRNP Sm proteins family. In terms of assembly, component of the heptameric LSM1-LSM7 complex that forms a seven-membered ring structure with a donut shape. The LSm subunits are arranged in the order lsm1, lsm2, lsm3, lsm6, lsm5, lsm7 and lsm4. Component of the heptameric LSM2-LSM8 complex that forms a seven-membered ring structure with a donut shape. The LSm subunits are arranged in the order lsm8, lsm2, lsm3, lsm6, lsm5, lsm7 and lsm4.

It localises to the nucleus. Its subcellular location is the cytoplasm. Functionally, component of LSm protein complexes, which are involved in RNA processing and may function in a chaperone-like manner. Component of the cytoplasmic LSM1-LSM7 complex which is involved in mRNA degradation by activating the decapping step. The LSM1-LSM7 complex loads onto the 3'-end of single stranded RNA. Component of the nuclear LSM2-LSM8 complex, which is involved in spliceosome assembly. The LSM2-LSM8 complex plays a role in the biogenesis of the spliceosomal U4/U6-U5 tri-snRNP complex by accelerating prp24-mediated annealing of U4/U6 di-snRNA. The LSM2-LSM8 complex binds U6 snRNA terminating with a cyclic 2',3' phosphate group; RNA with an unmodified 3' hydroxyl or non-cyclic 3' phosphate is bound less tightly. This chain is LSM complex subunit lsm3 (lsm3), found in Schizosaccharomyces pombe (strain 972 / ATCC 24843) (Fission yeast).